Consider the following 1373-residue polypeptide: Ribonuclease 3 (1373 aa).

3 disordered regions span residues 1-99 (MQGN…PVRP), 119-406 (MPPP…EEEL), and 447-496 (FEEE…SSSS). Positions 47–69 (PAQYQYEPPSAPSSSYSNSQAPS) are enriched in low complexity. Composition is skewed to pro residues over residues 70–99 (FMPPRPDFVPYPPPAAPSAQGPLPPCPVRP), 119–133 (MPPPMPCPNNPPASG), and 144–159 (MVPPPSMPHPPPPPVM). Low complexity-rich tracts occupy residues 160 to 169 (PQQVNYQYPP) and 185 to 200 (NNSSSFPPSANSSSTP). Composition is skewed to basic and acidic residues over residues 214–271 (QNER…DRGR), 278–288 (RSYERSRERDR), and 297–312 (RRSPSLERSYKKEYKR). Phosphoserine occurs at positions 354 and 372. Composition is skewed to basic and acidic residues over residues 363–398 (RWEEEKDRWSDSQGSGKEKNYTSIKEKEAEEVPPEK) and 447–459 (FEEELGNRQEKAK). Positions 389–1364 (KEAEEVPPEK…RWEREHQERE (976 aa)) are necessary for interaction with DGCR8 and pri-miRNA processing activity. The segment covering 474 to 490 (EDLESSSESECETDDDS) has biased composition (acidic residues). 7 residues coordinate Zn(2+): C535, C537, H548, C560, H608, C675, and H679. 2 RNase III domains span residues 875–1055 (LMHL…LEGS) and 1106–1232 (LTEF…IDKD). E968 is a binding site for Mg(2+). Position 1025 (H1025) interacts with Zn(2+). Residues N1041, E1044, E1146, D1218, and E1221 each coordinate Mg(2+). Residues 1259–1333 (DPKSQLQQCC…AMDALEKYNF (75 aa)) enclose the DRBM domain.

The protein belongs to the ribonuclease III family. As to quaternary structure, component of the microprocessor complex, or pri-miRNA processing protein complex, which is composed of DROSHA and DGCR8. The microprocessor complex is a heterotrimer; each of the two DROSHA RNase III domains binds one DGCR8 (via C-terminal region). Interacts with SP1 and SNIP1. Interacts with SRRT/ARS2. Interacts with CPSF3 and ISY1; this interaction is in an RNA dependent manner. Interacts with PUS10; interaction promotes pri-miRNAs processing. It depends on Mg(2+) as a cofactor. Mn(2+) serves as cofactor. Degraded by autophagy in response to neuronal activity in motor neurons. As to expression, expressed in motor neurons (at protein level).

It is found in the nucleus. Its subcellular location is the nucleolus. It localises to the cytoplasm. It carries out the reaction Endonucleolytic cleavage to 5'-phosphomonoester.. Ribonuclease III double-stranded (ds) RNA-specific endoribonuclease that is involved in the initial step of microRNA (miRNA) biogenesis. Component of the microprocessor complex that is required to process primary miRNA transcripts (pri-miRNAs) to release precursor miRNA (pre-miRNA) in the nucleus. Within the microprocessor complex, DROSHA cleaves the 3' and 5' strands of a stem-loop in pri-miRNAs (processing center 11 bp from the dsRNA-ssRNA junction) to release hairpin-shaped pre-miRNAs that are subsequently cut by the cytoplasmic DICER to generate mature miRNAs. Involved also in pre-rRNA processing. Cleaves double-strand RNA and does not cleave single-strand RNA. Involved in the formation of GW bodies. Plays a role in growth homeostasis in response to autophagy in motor neurons. The protein is Ribonuclease 3 (Drosha) of Mus musculus (Mouse).